We begin with the raw amino-acid sequence, 406 residues long: Tryptophan synthase beta chain (406 aa).

The residue at position 99 (lysine 99) is an N6-(pyridoxal phosphate)lysine.

The protein belongs to the TrpB family. As to quaternary structure, tetramer of two alpha and two beta chains. It depends on pyridoxal 5'-phosphate as a cofactor.

It carries out the reaction (1S,2R)-1-C-(indol-3-yl)glycerol 3-phosphate + L-serine = D-glyceraldehyde 3-phosphate + L-tryptophan + H2O. The protein operates within amino-acid biosynthesis; L-tryptophan biosynthesis; L-tryptophan from chorismate: step 5/5. Functionally, the beta subunit is responsible for the synthesis of L-tryptophan from indole and L-serine. The chain is Tryptophan synthase beta chain from Rhizobium johnstonii (strain DSM 114642 / LMG 32736 / 3841) (Rhizobium leguminosarum bv. viciae).